Reading from the N-terminus, the 137-residue chain is Histone H2B (137 aa).

A compositionally biased stretch (basic and acidic residues) spans 1–10 (MAPKAADKKP). The interval 1-45 (MAPKAADKKPASKAPATASKAPEKKDAGKKTAPSGDKKKRTKARK) is disordered. N6-acetyllysine; alternate occurs at positions 8 and 9. Glycyl lysine isopeptide (Lys-Gly) (interchain with G-Cter in SUMO); alternate cross-links involve residues lysine 8 and lysine 9. Serine 12 carries the phosphoserine modification. Lysine 13 bears the N6-acetyllysine mark. Residue lysine 24 is modified to N6-acetyllysine; alternate. Lysine 24 participates in a covalent cross-link: Glycyl lysine isopeptide (Lys-Gly) (interchain with G-Cter in SUMO); alternate. Lysine 25 participates in a covalent cross-link: Glycyl lysine isopeptide (Lys-Gly) (interchain with G-Cter in SUMO). Residue lysine 131 forms a Glycyl lysine isopeptide (Lys-Gly) (interchain with G-Cter in ubiquitin) linkage.

It belongs to the histone H2B family. In terms of assembly, the nucleosome is a histone octamer containing two molecules each of H2A, H2B, H3 and H4 assembled in one H3-H4 heterotetramer and two H2A-H2B heterodimers. The octamer wraps approximately 147 bp of DNA. Monoubiquitinated by the UBC2-BRE1 complex to form H2BK123ub1. H2BK123ub1 gives a specific tag for epigenetic transcriptional activation and is also prerequisite for H3K4me and H3K79me formation. H2BK123ub1 also modulates the formation of double-strand breaks during meiosis and is a prerequisite for DNA-damage checkpoint activation. In terms of processing, phosphorylated to form H2BS10ph during progression through meiotic prophase. May be correlated with chromosome condensation. Post-translationally, acetylated by GCN5 to form H2BK11ac and H2BK16ac. H2BK16ac can also be formed by ESA1. Acetylation of N-terminal lysines and particularly formation of H2BK11acK16ac has a positive effect on transcription. Sumoylation to form H2BK6su or H2BK7su, and probably also H2BK16su or H2BK17su, occurs preferentially near the telomeres and represses gene transcription.

Its subcellular location is the nucleus. The protein localises to the chromosome. In terms of biological role, core component of nucleosome. Nucleosomes wrap and compact DNA into chromatin, limiting DNA accessibility to the cellular machineries which require DNA as a template. Histones thereby play a central role in transcription regulation, DNA repair, DNA replication and chromosomal stability. DNA accessibility is regulated via a complex set of post-translational modifications of histones, also called histone code, and nucleosome remodeling. The polypeptide is Histone H2B (HTB1) (Chaetomium globosum (strain ATCC 6205 / CBS 148.51 / DSM 1962 / NBRC 6347 / NRRL 1970) (Soil fungus)).